We begin with the raw amino-acid sequence, 458 residues long: Ammonium transporter Rh type B (458 aa).

Residues 1 to 13 are Cytoplasmic-facing; it reads MAGSPSRAAGRRL. A helical membrane pass occupies residues 14–34; sequence QLPLLCLFLQGATAVLFAVFV. The Extracellular portion of the chain corresponds to 35–61; that stretch reads RYNHKTDAALWHRGNYSNADNEFYFRY. A glycan (N-linked (GlcNAc...) asparagine) is linked at Asn49. Residues 62 to 82 form a helical membrane-spanning segment; that stretch reads PSFQDVHAMVFVGFGFLMVFL. Topologically, residues 83-86 are cytoplasmic; it reads QRYG. Residues 87 to 107 form a helical membrane-spanning segment; the sequence is FSSVGFTFLLAAFALQWSTLV. Residues 108–124 are Extracellular-facing; sequence QGFLHSFHSGHIHVGVE. Residues 125 to 145 traverse the membrane as a helical segment; that stretch reads SMINADFCAGAVLISFGAVLG. Residues 146-149 lie on the Cytoplasmic side of the membrane; it reads KTGP. The chain crosses the membrane as a helical span at residues 150 to 170; it reads AQLLLMALLEVVLFGINEFVL. Over 171 to 178 the chain is Extracellular; that stretch reads LHLLGVRD. A helical transmembrane segment spans residues 179–201; sequence AGGSMTIHTFGAYFGLVLSRVLY. Residues 202 to 219 are Cytoplasmic-facing; sequence RPQLEKSKHRQGSVYHSD. Residues 220–240 traverse the membrane as a helical segment; it reads LFAMIGTIFLWIFWPSFNSAL. Residues 241–251 lie on the Extracellular side of the membrane; the sequence is TALGAGQHRTA. A helical membrane pass occupies residues 252–272; the sequence is LNTYYSLAASTLGTFALSALV. The Cytoplasmic portion of the chain corresponds to 273 to 282; it reads GEDGRLDMVH. A helical membrane pass occupies residues 283 to 303; it reads IQNAALAGGVVVGTSSEMMLT. A topological domain (extracellular) is located at residue Pro304. The helical transmembrane segment at 305–325 threads the bilayer; it reads FGALAAGFLAGTVSTLGYKFF. The Cytoplasmic portion of the chain corresponds to 326–346; the sequence is TPILESKFKVQDTCGVHNLHG. The chain crosses the membrane as a helical span at residues 347 to 367; sequence MPGVLGALLGVLVAGLATHEA. The Extracellular portion of the chain corresponds to 368–393; that stretch reads YGDGLESVFPLIAEGQRSATSQAMLQ. Residues 394–414 traverse the membrane as a helical segment; the sequence is LFGLFVTLMFASVGGGLGGLL. Residues 415–458 are Cytoplasmic-facing; sequence LKLPFLDSPPDSQCYEDQVHWQVPGEHEDEAQRPLRVEEADTQA. The segment at 416 to 424 is interaction with ANK3; the sequence is KLPFLDSPP. The Basolateral sorting signal motif lies at 429–432; the sequence is YEDQ. Positions 439–458 are disordered; the sequence is GEHEDEAQRPLRVEEADTQA. Basic and acidic residues predominate over residues 444 to 458; it reads EAQRPLRVEEADTQA.

The protein belongs to the ammonium transporter (TC 2.A.49) family. Rh subfamily. Interacts (via C-terminus) with ANK2 and ANK3; required for targeting to the basolateral membrane. In terms of processing, N-glycosylated.

The protein resides in the cell membrane. It localises to the basolateral cell membrane. It carries out the reaction NH4(+)(in) = NH4(+)(out). The catalysed reaction is methylamine(out) = methylamine(in). It catalyses the reaction CO2(out) = CO2(in). Functionally, ammonium transporter involved in the maintenance of acid-base homeostasis. Transports ammonium and its related derivative methylammonium across the basolateral plasma membrane of epithelial cells likely contributing to renal transepithelial ammonia transport and ammonia metabolism. May transport either NH4(+) or NH3 ammonia species predominantly mediating an electrogenic NH4(+) transport. May act as a CO2 channel providing for renal acid secretion. The protein is Ammonium transporter Rh type B (RHBG) of Papio hamadryas (Hamadryas baboon).